Reading from the N-terminus, the 641-residue chain is Frizzled-1 (641 aa).

A signal peptide spans 1-68 (MAEEAVPSES…WLLEAPLLLG (68 aa)). Residues 69–316 (VRAQPAGQVS…PEELRFSRTW (248 aa)) lie on the Extracellular side of the membrane. A disordered region spans residues 74–99 (AGQVSGPGQQRPPPPQPQQGGQQYNG). Residues 106–224 (PDHGYCQPIS…HGAGELCVGQ (119 aa)) enclose the FZ domain. Disulfide bonds link Cys-111–Cys-172, Cys-119–Cys-165, Cys-156–Cys-192, Cys-182–Cys-221, and Cys-186–Cys-209. N-linked (GlcNAc...) asparagine glycosylation occurs at Asn-125. Asn-225 carries an N-linked (GlcNAc...) asparagine glycan. The helical transmembrane segment at 317 to 337 (IGIWSVLCCASTLFTVLTYLV) threads the bilayer. At 338–348 (DMRRFSYPERP) the chain is on the cytoplasmic side. Residues 349 to 369 (IIFLSGCYTAVAVAYIAGFLL) form a helical membrane-spanning segment. Topologically, residues 370-396 (EDRVVCNDKFAEDGARTVAQGTKKEGC) are extracellular. A helical transmembrane segment spans residues 397-417 (TILFMMLYFFSMASSIWWVIL). The Cytoplasmic segment spans residues 418–439 (SLTWFLAAGMKWGHEAIEANSQ). The chain crosses the membrane as a helical span at residues 440 to 460 (YFHLAAWAVPAIKTITILALG). Topologically, residues 461–483 (QVDGDVLSGVCFVGLNNVDALRG) are extracellular. Residues 484–504 (FVLAPLFVYLFIGTSFLLAGF) traverse the membrane as a helical segment. The Cytoplasmic portion of the chain corresponds to 505 to 530 (VSLFRIRTIMKHDGTKTEKLEKLMVR). The chain crosses the membrane as a helical span at residues 531 to 551 (IGVFSVLYTVPATIVIACYFY). Over 552 to 595 (EQAFRDQWERSWVAQSCKSYAIPCPHLQGGGGVPPHPPMSPDFT) the chain is Extracellular. Residues 596–616 (VFMIKYLMTLIVGITSGFWIW) traverse the membrane as a helical segment. Residues 617 to 641 (SGKTLNSWRKFYTRLTNSKQGETTV) lie on the Cytoplasmic side of the membrane. Positions 619–624 (KTLNSW) match the Lys-Thr-X-X-X-Trp motif, mediates interaction with the PDZ domain of Dvl family members motif. A PDZ-binding motif is present at residues 639–641 (TTV).

It belongs to the G-protein coupled receptor Fz/Smo family. As to quaternary structure, interacts with MYOC. Interacts with WNT7B. Ubiquitinated by ZNRF3, leading to its degradation by the proteasome. In terms of tissue distribution, widely expressed. Most abundant in kidney, liver, uterus, ovary and heart. Lower levels seen in brain and intestine. Extremely low in calvaria, mammary glands and testis.

It is found in the cell membrane. Functionally, receptor for Wnt proteins. Activated by WNT3A, WNT3, WNT1 and to a lesser extent WNT2, but apparently not by WNT4, WNT5A, WNT5B, WNT6 or WNT7A. Contradictory results have been reported for activation by WNT7B. Functions in the canonical Wnt/beta-catenin signaling pathway. The canonical Wnt/beta-catenin signaling pathway leads to the activation of disheveled proteins, inhibition of GSK-3 kinase, nuclear accumulation of beta-catenin and activation of Wnt target genes. A second signaling pathway involving PKC and calcium fluxes has been seen for some family members, but it is not yet clear if it represents a distinct pathway or if it can be integrated in the canonical pathway, as PKC seems to be required for Wnt-mediated inactivation of GSK-3 kinase. Both pathways seem to involve interactions with G-proteins. May be involved in transduction and intercellular transmission of polarity information during tissue morphogenesis and/or in differentiated tissues. The sequence is that of Frizzled-1 (Fzd1) from Rattus norvegicus (Rat).